We begin with the raw amino-acid sequence, 118 residues long: Waprin-Enh1 (118 aa).

Positions 1 to 24 are cleaved as a signal peptide; the sequence is MKTLTGLLLVGLLALWIGLPSTSS. 2 consecutive WAP domains span residues 25-72 and 74-118; these read KILF…RSCR and PPVL…RICK. Cystine bridges form between C30-C63, C40-C67, C50-C62, C56-C71, C81-C109, C88-C113, C96-C108, and C102-C117.

It belongs to the venom waprin family. Expressed by the venom gland.

It is found in the secreted. In terms of biological role, damages membranes of susceptible bacteria. Has no hemolytic activity. Not toxic to mice. Does not inhibit the proteinases elastase and cathepsin G. The protein is Waprin-Enh1 of Pseudoferania polylepis (Macleay's water snake).